A 384-amino-acid polypeptide reads, in one-letter code: S-adenosylmethionine synthase (384 aa).

H15 is an ATP binding site. Residue D17 coordinates Mg(2+). Position 43 (E43) interacts with K(+). L-methionine-binding residues include E56 and Q99. Residues 99–109 are flexible loop; sequence QSPDINQGVDR. ATP is bound by residues 164 to 166, 230 to 231, D239, 245 to 246, A262, and K266; these read DAK, RF, and RK. D239 is an L-methionine binding site. K270 is an L-methionine binding site.

This sequence belongs to the AdoMet synthase family. In terms of assembly, homotetramer; dimer of dimers. Requires Mg(2+) as cofactor. It depends on K(+) as a cofactor.

The protein resides in the cytoplasm. It catalyses the reaction L-methionine + ATP + H2O = S-adenosyl-L-methionine + phosphate + diphosphate. The protein operates within amino-acid biosynthesis; S-adenosyl-L-methionine biosynthesis; S-adenosyl-L-methionine from L-methionine: step 1/1. Functionally, catalyzes the formation of S-adenosylmethionine (AdoMet) from methionine and ATP. The overall synthetic reaction is composed of two sequential steps, AdoMet formation and the subsequent tripolyphosphate hydrolysis which occurs prior to release of AdoMet from the enzyme. This is S-adenosylmethionine synthase from Salmonella arizonae (strain ATCC BAA-731 / CDC346-86 / RSK2980).